The following is a 402-amino-acid chain: Multidrug resistance protein MdtH (402 aa).

Residues 1-12 (MSRVSQARNLGK) are Cytoplasmic-facing. A helical membrane pass occupies residues 13–33 (YFLLIDNMLVVLVFFVVFPLI). The Periplasmic segment spans residues 34–98 (SIRFVDQMGW…GFATMGIAHE (65 aa)). Residues 99-116 (PWLLWFSCFLSGLGGTLF) traverse the membrane as a helical segment. Residues 117–138 (DPPRSALVVKLIRPEQRGRFFS) are Cytoplasmic-facing. A helical membrane pass occupies residues 139-159 (LLMMQDSAGAVIGALLGSWLL). Residues 160–164 (QYDFR) lie on the Periplasmic side of the membrane. The helical transmembrane segment at 165–185 (LVCATGAILFILCALFNAWLL) threads the bilayer. Topologically, residues 186-213 (PAWKLSTVRTPVREGMRRVMSDKRFVTY) are cytoplasmic. Residues 214–234 (VLTLAGYYMLAVQVMLMLPIM) traverse the membrane as a helical segment. At 235 to 243 (VNDIAGSPA) the chain is on the periplasmic side. A helical membrane pass occupies residues 244 to 264 (AVKWMYAIEACLSLTLLYPIA). Over 265–276 (RWSEKRFRLEHR) the chain is Cytoplasmic. A helical transmembrane segment spans residues 277–297 (LMAGLLVMSLSMIPIGMVGNL). Topologically, residues 298–299 (QQ) are periplasmic. Residues 300 to 320 (LFTLICAFYIGSVIAEPARET) traverse the membrane as a helical segment. Residues 321–339 (LSASLADARARGSYMGFSR) lie on the Cytoplasmic side of the membrane. Residues 340 to 360 (LGLAIGGAIGYIGGGWLFDMG) traverse the membrane as a helical segment. The Periplasmic segment spans residues 361 to 367 (KALTQPE). The chain crosses the membrane as a helical span at residues 368–388 (LPWMMLGIIGFITFLALGWQF). Residues 389–402 (SHKRTPRRMLEPGA) are Cytoplasmic-facing.

This sequence belongs to the major facilitator superfamily. DHA1 family. MdtH (TC 2.A.1.2.21) subfamily.

Its subcellular location is the cell inner membrane. This is Multidrug resistance protein MdtH from Salmonella choleraesuis (strain SC-B67).